The primary structure comprises 611 residues: MAU2 chromatid cohesion factor homolog (611 aa).

5 TPR repeats span residues 11-46 (YAGL…NPPP), 91-124 (FEAS…TSGE), 131-164 (FRLF…AEQC), 371-404 (PILH…ADNP), and 490-523 (ACSL…SGKI). Residues 581–611 (WTGAVSPTKSSTIPPQQSFQTWSQPGPSRLS) are disordered. Over residues 585–611 (VSPTKSSTIPPQQSFQTWSQPGPSRLS) the composition is skewed to polar residues.

This sequence belongs to the SCC4/mau-2 family. Component of the cohesin loading complex.

Its subcellular location is the nucleus. It localises to the nucleoplasm. Required for association of the cohesin complex with chromatin during interphase. Plays a role in sister chromatid cohesion and normal progression through prometaphase. In Nematostella vectensis (Starlet sea anemone), this protein is MAU2 chromatid cohesion factor homolog.